Consider the following 198-residue polypeptide: dITP/XTP pyrophosphatase (198 aa).

7 to 12 (THNPHK) contacts substrate. Mg(2+)-binding residues include glutamate 40 and aspartate 69. Aspartate 69 acts as the Proton acceptor in catalysis. Residues threonine 70, 151–154 (FGYD), lysine 174, and 179–180 (HR) contribute to the substrate site.

The protein belongs to the HAM1 NTPase family. Homodimer. Mg(2+) serves as cofactor.

It carries out the reaction XTP + H2O = XMP + diphosphate + H(+). The catalysed reaction is dITP + H2O = dIMP + diphosphate + H(+). The enzyme catalyses ITP + H2O = IMP + diphosphate + H(+). Functionally, pyrophosphatase that catalyzes the hydrolysis of nucleoside triphosphates to their monophosphate derivatives, with a high preference for the non-canonical purine nucleotides XTP (xanthosine triphosphate), dITP (deoxyinosine triphosphate) and ITP. Seems to function as a house-cleaning enzyme that removes non-canonical purine nucleotides from the nucleotide pool, thus preventing their incorporation into DNA/RNA and avoiding chromosomal lesions. The polypeptide is dITP/XTP pyrophosphatase (Thermoanaerobacter sp. (strain X514)).